A 226-amino-acid chain; its full sequence is Leucyl/phenylalanyl-tRNA--protein transferase (226 aa).

It belongs to the L/F-transferase family.

It localises to the cytoplasm. It carries out the reaction N-terminal L-lysyl-[protein] + L-leucyl-tRNA(Leu) = N-terminal L-leucyl-L-lysyl-[protein] + tRNA(Leu) + H(+). The enzyme catalyses N-terminal L-arginyl-[protein] + L-leucyl-tRNA(Leu) = N-terminal L-leucyl-L-arginyl-[protein] + tRNA(Leu) + H(+). The catalysed reaction is L-phenylalanyl-tRNA(Phe) + an N-terminal L-alpha-aminoacyl-[protein] = an N-terminal L-phenylalanyl-L-alpha-aminoacyl-[protein] + tRNA(Phe). Functions in the N-end rule pathway of protein degradation where it conjugates Leu, Phe and, less efficiently, Met from aminoacyl-tRNAs to the N-termini of proteins containing an N-terminal arginine or lysine. This chain is Leucyl/phenylalanyl-tRNA--protein transferase, found in Pseudomonas aeruginosa (strain UCBPP-PA14).